The sequence spans 444 residues: Glutamate--tRNA ligase 2 (444 aa).

The 'HIGH' region signature appears at 7–17; sequence PSPTGYLHVGN. Positions 240–244 match the 'KMSKS' region motif; sequence KLSKR. Lysine 243 is an ATP binding site.

It belongs to the class-I aminoacyl-tRNA synthetase family. Glutamate--tRNA ligase type 1 subfamily. In terms of assembly, monomer.

It localises to the cytoplasm. The enzyme catalyses tRNA(Glu) + L-glutamate + ATP = L-glutamyl-tRNA(Glu) + AMP + diphosphate. In terms of biological role, catalyzes the attachment of glutamate to tRNA(Glu) in a two-step reaction: glutamate is first activated by ATP to form Glu-AMP and then transferred to the acceptor end of tRNA(Glu). This is Glutamate--tRNA ligase 2 from Gluconobacter oxydans (strain 621H) (Gluconobacter suboxydans).